Here is a 299-residue protein sequence, read N- to C-terminus: Acetylglutamate kinase (299 aa).

Residues 72 to 73 (GG), Arg-94, and Asn-196 each bind substrate.

It belongs to the acetylglutamate kinase family. ArgB subfamily.

The protein resides in the cytoplasm. It carries out the reaction N-acetyl-L-glutamate + ATP = N-acetyl-L-glutamyl 5-phosphate + ADP. Its pathway is amino-acid biosynthesis; L-arginine biosynthesis; N(2)-acetyl-L-ornithine from L-glutamate: step 2/4. Catalyzes the ATP-dependent phosphorylation of N-acetyl-L-glutamate. This chain is Acetylglutamate kinase, found in Burkholderia vietnamiensis (strain G4 / LMG 22486) (Burkholderia cepacia (strain R1808)).